We begin with the raw amino-acid sequence, 421 residues long: MVWEKEKIVGSCIVGGAAFAVGASFLHLFLKGELPLGLGLGLSCPWRILRKRKPVRVYMDGCFDMMHYGHCNALRQARALGDQLVVGVVSDEEIIANKGPPVTPLHERMTMVKAVKWVDEVISDAPYAITEDFMKKLFDEYQIDYIIHGDDPCVLPDGTDAYALAKKAGRYKQIKRTEGVSSTDIVGRMLLCVRERSISDTHSRSSLQRQFSHGHSSPKFEDGASSAGTRVSHFLPTSRRIVQFSNGKGPGPDARIIYIDGAFDLFHAGHVEILRRARELGDFLLVGIHNDQTVSAKRGAHRPIMNLHERSLSVLACRYVDEVIIGAPWEVSRDTITTFDISLVVHGTVAESDDFRKEEDNPYSVPISMGIFQVLDSPLDITTSTIIRRIVANHEAYQKRNAKKEASEKKYYEQKSFVSGD.

Residues 8–28 (IVGSCIVGGAAFAVGASFLHL) traverse the membrane as a helical segment. Residues 203–227 (SRSSLQRQFSHGHSSPKFEDGASSA) form a disordered region. Positions 204–215 (RSSLQRQFSHGH) are enriched in polar residues. CTP-binding positions include 262-263 (AF), 270-273 (HVEI), Arg298, 346-349 (HGTV), and 377-381 (SPLDI). The disordered stretch occupies residues 402-421 (AKKEASEKKYYEQKSFVSGD). Basic and acidic residues predominate over residues 403–413 (KKEASEKKYYE). Ser416 carries the phosphoserine modification.

It belongs to the cytidylyltransferase family. In terms of tissue distribution, expressed in root tip, lateral root primordia, leaves, shoot apex, stem vascular bundles, pollen and embryos.

It is found in the mitochondrion outer membrane. It carries out the reaction phosphoethanolamine + CTP + H(+) = CDP-ethanolamine + diphosphate. The protein operates within phospholipid metabolism; phosphatidylethanolamine biosynthesis; phosphatidylethanolamine from ethanolamine: step 2/3. In terms of biological role, plays an important role in the biosynthesis of the phospholipid phosphatidylethanolamine. Catalyzes the formation of CDP-ethanolamine. Essential for early embryonic development. This Arabidopsis thaliana (Mouse-ear cress) protein is Ethanolamine-phosphate cytidylyltransferase.